The chain runs to 237 residues: Small ribosomal subunit protein uS3 (237 aa).

A KH type-2 domain is found at 17 to 86 (VERHLGHELK…SPQIEVQQVD (70 aa)).

This sequence belongs to the universal ribosomal protein uS3 family. Part of the 30S ribosomal subunit.

In terms of biological role, binds the lower part of the 30S subunit head. The protein is Small ribosomal subunit protein uS3 of Methanospirillum hungatei JF-1 (strain ATCC 27890 / DSM 864 / NBRC 100397 / JF-1).